Here is a 398-residue protein sequence, read N- to C-terminus: MSLNSLDLPGKSEDTRVVVAMSGGVDSSVVAGILKREGYDVVGVTLQLYDHGAAVHRAGSCCAGQDIEDARRVSESLGIPHYVLDYEARFREAVIDPFANSYVSGETPIPCVSCNQTVKFADLLQTARDLGADALATGHYIRSRANGAHRALYRPVDTDRDQSYFLFATTQEQIDYLRFPLGHLPKAQVREIAEELGLTVAKKQDSQDICFVPQGKYSDIISRLKPEAANPGDIVHIDGRTLGRHDGIVHYTVGQRRGIGVATGEALYVVHLDAANARVIVGPREALETHKVFLRDVNWLGDTPIADLPKSGMEVFAKVRSTRPPRPAVLRHADGQTWVELVDGESGIAPGQACVLYSDDSNAARVFGGGFIGRSEREPQAEEMLRRLMANADKASAA.

ATP-binding positions include 20–27 (AMSGGVDS) and Leu46. Residue Cys114 is the Nucleophile of the active site. A disulfide bond links Cys114 and Cys210. Residue Gly138 participates in ATP binding. An interaction with tRNA region spans residues 160-162 (RDQ). Cys210 acts as the Cysteine persulfide intermediate in catalysis.

It belongs to the MnmA/TRMU family.

The protein localises to the cytoplasm. The enzyme catalyses S-sulfanyl-L-cysteinyl-[protein] + uridine(34) in tRNA + AH2 + ATP = 2-thiouridine(34) in tRNA + L-cysteinyl-[protein] + A + AMP + diphosphate + H(+). In terms of biological role, catalyzes the 2-thiolation of uridine at the wobble position (U34) of tRNA, leading to the formation of s(2)U34. This is tRNA-specific 2-thiouridylase MnmA from Brucella canis (strain ATCC 23365 / NCTC 10854 / RM-666).